A 1483-amino-acid chain; its full sequence is Dynein axonemal assembly factor 1 homolog (1483 aa).

6 LRR repeats span residues 34-56 (RLND…EEYT), 57-78 (ELKC…EKLS), 79-100 (KLKC…DPCR), 101-122 (ELDT…GTNV), 125-146 (VLNT…SDLI), and 150-171 (TLSV…KIFE). One can recognise an LRRCT domain in the interval 185 to 223 (PVVSRLPQYRKTLILACKELTYLDSRPVFPRDRACAEAW). 4 disordered regions span residues 249 to 282 (SINC…TCAE), 300 to 327 (EEVS…GTSS), 945 to 986 (DSGD…HGTK), and 1167 to 1213 (SENE…SIDD). Residues 311 to 327 (DGTNSSSSLEDNDGTSS) are compositionally biased toward polar residues. Residues 1183–1196 (TNDKESSDIMEKNG) are compositionally biased toward basic and acidic residues.

Belongs to the DNAAF1 family.

Its subcellular location is the cell projection. The protein localises to the cilium. Functionally, cilium-specific protein required for cilia structures. This is Dynein axonemal assembly factor 1 homolog (dtr) from Drosophila melanogaster (Fruit fly).